A 276-amino-acid chain; its full sequence is Elongation factor Ts (276 aa).

Positions 80-83 are involved in Mg(2+) ion dislocation from EF-Tu; it reads TDFV.

It belongs to the EF-Ts family.

The protein resides in the cytoplasm. In terms of biological role, associates with the EF-Tu.GDP complex and induces the exchange of GDP to GTP. It remains bound to the aminoacyl-tRNA.EF-Tu.GTP complex up to the GTP hydrolysis stage on the ribosome. The protein is Elongation factor Ts of Acidothermus cellulolyticus (strain ATCC 43068 / DSM 8971 / 11B).